The following is a 165-amino-acid chain: UPF0303 protein BMA1246 (165 aa).

This sequence belongs to the UPF0303 family.

This chain is UPF0303 protein BMA1246, found in Burkholderia mallei (strain ATCC 23344).